The sequence spans 154 residues: 6,7-dimethyl-8-ribityllumazine synthase (154 aa).

Residues F22, 56 to 58 (AFE), and 81 to 83 (VLI) each bind 5-amino-6-(D-ribitylamino)uracil. 86-87 (ET) lines the (2S)-2-hydroxy-3-oxobutyl phosphate pocket. The active-site Proton donor is H89. F114 serves as a coordination point for 5-amino-6-(D-ribitylamino)uracil. R128 is a (2S)-2-hydroxy-3-oxobutyl phosphate binding site.

The protein belongs to the DMRL synthase family.

It catalyses the reaction (2S)-2-hydroxy-3-oxobutyl phosphate + 5-amino-6-(D-ribitylamino)uracil = 6,7-dimethyl-8-(1-D-ribityl)lumazine + phosphate + 2 H2O + H(+). Its pathway is cofactor biosynthesis; riboflavin biosynthesis; riboflavin from 2-hydroxy-3-oxobutyl phosphate and 5-amino-6-(D-ribitylamino)uracil: step 1/2. In terms of biological role, catalyzes the formation of 6,7-dimethyl-8-ribityllumazine by condensation of 5-amino-6-(D-ribitylamino)uracil with 3,4-dihydroxy-2-butanone 4-phosphate. This is the penultimate step in the biosynthesis of riboflavin. This is 6,7-dimethyl-8-ribityllumazine synthase from Chlamydia abortus (strain DSM 27085 / S26/3) (Chlamydophila abortus).